The sequence spans 515 residues: Gamma aminobutyrate transaminase 1, mitochondrial (515 aa).

The N-terminal 57 residues, 1–57 (MAKISRLFGSTVKAAITAQAGFHGKRIPAVSSLQEHIVKSTPARYNSTQACLENDIS), are a transit peptide targeting the mitochondrion. Residue 172–173 (GS) coordinates pyridoxal 5'-phosphate. Tyr205 serves as a coordination point for substrate. Asp312 provides a ligand contact to pyridoxal 5'-phosphate. Substrate is bound at residue Lys341. At Lys341 the chain carries N6-(pyridoxal phosphate)lysine.

Belongs to the class-III pyridoxal-phosphate-dependent aminotransferase family. As to expression, expressed in leaves, roots, stems, flowers and fruits.

Its subcellular location is the mitochondrion. It carries out the reaction 4-aminobutanoate + pyruvate = succinate semialdehyde + L-alanine. It catalyses the reaction 4-aminobutanoate + glyoxylate = succinate semialdehyde + glycine. Its function is as follows. Transaminase that degrades gamma-amino butyric acid (GABA) and uses pyruvate or glyoxylate as amino-group acceptor. Cannot use beta-alanine, ornithine, acetylornithine, serine, glycine, asparagine, glutamine, glutamate, valine, leucine, isoleucine, methionine, phenylalanine, histidine, lysine, arginine, aspartate, threonine, tyrosine, tryptophan, proline, or cysteine as amino donors. Acts predominantly in vegetative tissues. In Solanum lycopersicum (Tomato), this protein is Gamma aminobutyrate transaminase 1, mitochondrial (GABA-TP1).